The following is a 342-amino-acid chain: Glycerol-1-phosphate dehydrogenase [NAD(P)+] (342 aa).

Residues 84-88 and 106-109 each bind NAD(+); these read GRPID and TSAS. Substrate is bound at residue Asp-111. Ser-115 serves as a coordination point for NAD(+). Asp-160 lines the substrate pocket. Asp-160 and His-241 together coordinate Zn(2+). Residue His-245 participates in substrate binding. Zn(2+) is bound at residue His-260.

Belongs to the glycerol-1-phosphate dehydrogenase family. Homodimer. Zn(2+) is required as a cofactor.

It localises to the cytoplasm. The catalysed reaction is sn-glycerol 1-phosphate + NAD(+) = dihydroxyacetone phosphate + NADH + H(+). The enzyme catalyses sn-glycerol 1-phosphate + NADP(+) = dihydroxyacetone phosphate + NADPH + H(+). Its pathway is membrane lipid metabolism; glycerophospholipid metabolism. In terms of biological role, catalyzes the NAD(P)H-dependent reduction of dihydroxyacetonephosphate (DHAP or glycerone phosphate) to glycerol 1-phosphate (G1P). The G1P thus generated is used as the glycerophosphate backbone of phospholipids in the cellular membranes of Archaea. In Pyrobaculum islandicum (strain DSM 4184 / JCM 9189 / GEO3), this protein is Glycerol-1-phosphate dehydrogenase [NAD(P)+].